The primary structure comprises 207 residues: Urease accessory protein UreG (207 aa).

14 to 21 (GPVGSGKT) is a GTP binding site.

Belongs to the SIMIBI class G3E GTPase family. UreG subfamily. As to quaternary structure, homodimer. UreD, UreF and UreG form a complex that acts as a GTP-hydrolysis-dependent molecular chaperone, activating the urease apoprotein by helping to assemble the nickel containing metallocenter of UreC. The UreE protein probably delivers the nickel.

The protein localises to the cytoplasm. Functionally, facilitates the functional incorporation of the urease nickel metallocenter. This process requires GTP hydrolysis, probably effectuated by UreG. This chain is Urease accessory protein UreG, found in Tolumonas auensis (strain DSM 9187 / NBRC 110442 / TA 4).